A 478-amino-acid chain; its full sequence is BTB/POZ domain-containing protein 17 (478 aa).

The first 28 residues, 1 to 28, serve as a signal peptide directing secretion; sequence MLRKGSCKPGSWGSFWAILALVGLVTRA. Asparagine 61, asparagine 100, asparagine 195, and asparagine 307 each carry an N-linked (GlcNAc...) asparagine glycan. One can recognise a BTB domain in the interval 63–132; that stretch reads SDVILRVQAV…LYCGELTVLL (70 aa). Residues 169–269 enclose the BACK domain; that stretch reads AVGWYHYAVS…IPPAQLFQLQ (101 aa).

The protein localises to the secreted. The protein is BTB/POZ domain-containing protein 17 (Btbd17) of Mus musculus (Mouse).